We begin with the raw amino-acid sequence, 292 residues long: (S)-phenoxypropionate/alpha-ketoglutarate-dioxygenase (292 aa).

Residues His108 and Asp110 each coordinate Fe cation. 2-oxoglutarate is bound by residues Thr135 and Trp247. His262 provides a ligand contact to Fe cation. Arg273 contributes to the 2-oxoglutarate binding site.

This sequence belongs to the TfdA dioxygenase family. Monomer. The cofactor is Fe cation. L-ascorbate is required as a cofactor.

It carries out the reaction (S)-2-(4-chloro-2-methylphenoxy)propanoate + 2-oxoglutarate + O2 = 2-methyl-4-chlorophenol + pyruvate + succinate + CO2. The enzyme catalyses (S)-(2,4-dichlorophenoxy)propanoate + 2-oxoglutarate + O2 = 2,4-dichlorophenol + pyruvate + succinate + CO2. It functions in the pathway xenobiotic degradation; 2-(2,4-dichlorophenoxy)propanoate degradation. With respect to regulation, inhibited by divalent cations, most significantly by copper and nickel, and by diethylpyrocarbonate (DEPC). In terms of biological role, involved in the degradation of the phenoxypropionate herbicides. Catalyzes the enantiospecific cleavage of the ether bond in the herbicid S-dichlorprop ((S)-2-(2,4-dichlorophenoxy)propionate)(S-2,4-DP) and S-mecoprop ((S)-2-(4-chloro-2-methylphenoxy)propionate)(S-2,4-MCPP). It can also accept (RS)-2-(4-chlorophenoxy)propionate, (RS)-2-(m-chlorophenoxy)propionate and phenoxyacetate derivatives such as 2,4-dichlorophenoxyacetate (2,4-D), however it can only accept 2-oxoglutarate as oxygen acceptor. This chain is (S)-phenoxypropionate/alpha-ketoglutarate-dioxygenase, found in Delftia acidovorans (Pseudomonas acidovorans).